The following is a 557-amino-acid chain: Protein PNS1 (557 aa).

Positions 1-58 (MSTEKQYQPQQPPPAYTGQGPDNGNAYGYPESYGKTETHSGDSCSGDTSMNPQQQGQQ) are disordered. Residues 1 to 99 (MSTEKQYQPQ…DNNKPKFNDW (99 aa)) lie on the Cytoplasmic side of the membrane. Over residues 41–58 (GDSCSGDTSMNPQQQGQQ) the composition is skewed to polar residues. Residues 100-120 (PFIIVFLLTLCGFIVVASLTL) traverse the membrane as a helical segment. The Extracellular portion of the chain corresponds to 121–147 (RAWSQTYSSTGSGIYHDFDTGTLNTNS). Residues 148-168 (VILLVFSVVIAIFFAFIGIVL) form a helical membrane-spanning segment. Topologically, residues 169 to 174 (CRAYPK) are cytoplasmic. Residues 175–195 (FFIYAGMIVNILAALGTAIMY) form a helical membrane-spanning segment. Over 196–200 (MSLKY) the chain is Extracellular. A helical transmembrane segment spans residues 201-221 (WSAGIVFLIFTFMTAWCYWGM). Over 222-246 (RSRIPLTVAILRVIVLAMKNCPQSL) the chain is Cytoplasmic. The helical transmembrane segment at 247-267 (FVSFFGTIVASAFAMLFSTVV) threads the bilayer. Residues 268–292 (VATYMKYDPSNTNSGCNVSGGDCSH) are Extracellular-facing. Asn284 carries N-linked (GlcNAc...) asparagine glycosylation. Residues 293 to 313 (AKLIGVLVVVFFCGYYISEVI) traverse the membrane as a helical segment. At 314–350 (RNVMHCTVSGVFGSWYYRYKSDQGMPKWPAMGAFKRA) the chain is on the cytoplasmic side. Residues 351 to 371 (MTYSFGSICFGSLIVSIIETF) traverse the membrane as a helical segment. The Extracellular segment spans residues 372–393 (RQLLQLGKQAAIASTDNANWIR). Residues 394 to 414 (IIFWLIDMLVGFIQWIAQYFN) form a helical membrane-spanning segment. The Cytoplasmic portion of the chain corresponds to 415 to 454 (HYAYCIIALYGKPYLKAAKQTWYMFREKGIDALINDNLVN). The chain crosses the membrane as a helical span at residues 455–475 (VALGFYSLFASYMSCLFAFLY). At 476 to 488 (LRFTKPGYNSDGD) the chain is on the extracellular side. Residues 489–509 (FNAPLMAFAFVIALQLTNIAN) form a helical membrane-spanning segment. At 510-557 (ETIRSGCATFFTALGHDPEVFQAQYPDRFDEIFRSYPQVLNKLTHQDV) the chain is on the cytoplasmic side.

It belongs to the CTL (choline transporter-like) family.

The protein resides in the cell membrane. Probably involved in transport through the plasma membrane. In Candida glabrata (strain ATCC 2001 / BCRC 20586 / JCM 3761 / NBRC 0622 / NRRL Y-65 / CBS 138) (Yeast), this protein is Protein PNS1 (PNS1).